The chain runs to 310 residues: ADP-L-glycero-D-manno-heptose-6-epimerase (310 aa).

NADP(+)-binding positions include 10–11 (FI), 31–32 (DN), K38, K53, 75–79 (EGACS), and N92. The active-site Proton acceptor is the Y140. K144 contributes to the NADP(+) binding site. Residue N169 participates in substrate binding. NADP(+) is bound by residues V170 and K178. Catalysis depends on K178, which acts as the Proton acceptor. Substrate is bound by residues S180, H187, 201 to 204 (FEGS), R209, and Y272.

It belongs to the NAD(P)-dependent epimerase/dehydratase family. HldD subfamily. As to quaternary structure, homopentamer. Requires NADP(+) as cofactor.

The enzyme catalyses ADP-D-glycero-beta-D-manno-heptose = ADP-L-glycero-beta-D-manno-heptose. It participates in nucleotide-sugar biosynthesis; ADP-L-glycero-beta-D-manno-heptose biosynthesis; ADP-L-glycero-beta-D-manno-heptose from D-glycero-beta-D-manno-heptose 7-phosphate: step 4/4. Catalyzes the interconversion between ADP-D-glycero-beta-D-manno-heptose and ADP-L-glycero-beta-D-manno-heptose via an epimerization at carbon 6 of the heptose. The polypeptide is ADP-L-glycero-D-manno-heptose-6-epimerase (Salmonella heidelberg (strain SL476)).